A 602-amino-acid polypeptide reads, in one-letter code: Elongation factor 4 (602 aa).

The 183-residue stretch at lysine 7–valine 189 folds into the tr-type G domain. GTP-binding positions include aspartate 19–threonine 24 and asparagine 136–aspartate 139.

The protein belongs to the TRAFAC class translation factor GTPase superfamily. Classic translation factor GTPase family. LepA subfamily.

It is found in the cell inner membrane. The catalysed reaction is GTP + H2O = GDP + phosphate + H(+). Functionally, required for accurate and efficient protein synthesis under certain stress conditions. May act as a fidelity factor of the translation reaction, by catalyzing a one-codon backward translocation of tRNAs on improperly translocated ribosomes. Back-translocation proceeds from a post-translocation (POST) complex to a pre-translocation (PRE) complex, thus giving elongation factor G a second chance to translocate the tRNAs correctly. Binds to ribosomes in a GTP-dependent manner. This is Elongation factor 4 from Coxiella burnetii (strain Dugway 5J108-111).